The primary structure comprises 87 residues: Small ribosomal subunit protein uS17 (87 aa).

This sequence belongs to the universal ribosomal protein uS17 family. Part of the 30S ribosomal subunit.

One of the primary rRNA binding proteins, it binds specifically to the 5'-end of 16S ribosomal RNA. This is Small ribosomal subunit protein uS17 from Bacillus velezensis (strain DSM 23117 / BGSC 10A6 / LMG 26770 / FZB42) (Bacillus amyloliquefaciens subsp. plantarum).